The primary structure comprises 73 residues: DNA-directed RNA polymerase subunit epsilon (73 aa).

The protein belongs to the RNA polymerase subunit epsilon family. RNAP is composed of a core of 2 alpha, a beta and a beta' subunit. The core is associated with a delta subunit, and at least one of epsilon or omega. When a sigma factor is associated with the core the holoenzyme is formed, which can initiate transcription.

The catalysed reaction is RNA(n) + a ribonucleoside 5'-triphosphate = RNA(n+1) + diphosphate. Its function is as follows. A non-essential component of RNA polymerase (RNAP). This chain is DNA-directed RNA polymerase subunit epsilon, found in Lactobacillus acidophilus (strain ATCC 700396 / NCK56 / N2 / NCFM).